A 124-amino-acid polypeptide reads, in one-letter code: Small ribosomal subunit protein uS12 (124 aa).

Asp89 carries the 3-methylthioaspartic acid modification.

Belongs to the universal ribosomal protein uS12 family. Part of the 30S ribosomal subunit. Contacts proteins S8 and S17. May interact with IF1 in the 30S initiation complex.

With S4 and S5 plays an important role in translational accuracy. Its function is as follows. Interacts with and stabilizes bases of the 16S rRNA that are involved in tRNA selection in the A site and with the mRNA backbone. Located at the interface of the 30S and 50S subunits, it traverses the body of the 30S subunit contacting proteins on the other side and probably holding the rRNA structure together. The combined cluster of proteins S8, S12 and S17 appears to hold together the shoulder and platform of the 30S subunit. This chain is Small ribosomal subunit protein uS12, found in Shewanella putrefaciens (strain CN-32 / ATCC BAA-453).